The primary structure comprises 103 residues: Large ribosomal subunit protein bL21 (103 aa).

This sequence belongs to the bacterial ribosomal protein bL21 family. Part of the 50S ribosomal subunit. Contacts protein L20.

This protein binds to 23S rRNA in the presence of protein L20. This is Large ribosomal subunit protein bL21 from Vibrio parahaemolyticus serotype O3:K6 (strain RIMD 2210633).